The chain runs to 225 residues: Uracil-DNA glycosylase (225 aa).

Aspartate 65 functions as the Proton acceptor in the catalytic mechanism.

It belongs to the uracil-DNA glycosylase (UDG) superfamily. UNG family.

It localises to the cytoplasm. The catalysed reaction is Hydrolyzes single-stranded DNA or mismatched double-stranded DNA and polynucleotides, releasing free uracil.. In terms of biological role, excises uracil residues from the DNA which can arise as a result of misincorporation of dUMP residues by DNA polymerase or due to deamination of cytosine. This is Uracil-DNA glycosylase from Bacillus mycoides (strain KBAB4) (Bacillus weihenstephanensis).